A 208-amino-acid polypeptide reads, in one-letter code: Protein-L-isoaspartate O-methyltransferase (208 aa).

S59 is a catalytic residue.

The protein belongs to the methyltransferase superfamily. L-isoaspartyl/D-aspartyl protein methyltransferase family.

Its subcellular location is the cytoplasm. The enzyme catalyses [protein]-L-isoaspartate + S-adenosyl-L-methionine = [protein]-L-isoaspartate alpha-methyl ester + S-adenosyl-L-homocysteine. Its function is as follows. Catalyzes the methyl esterification of L-isoaspartyl residues in peptides and proteins that result from spontaneous decomposition of normal L-aspartyl and L-asparaginyl residues. It plays a role in the repair and/or degradation of damaged proteins. The protein is Protein-L-isoaspartate O-methyltransferase of Vibrio vulnificus (strain CMCP6).